A 140-amino-acid chain; its full sequence is Probable disulfide formation protein C 2 (140 aa).

The helical transmembrane segment at 6–25 (KYHIAIAWTIATSAMLISLI) threads the bilayer. A disulfide bridge links Cys35 with Cys38. The next 2 membrane-spanning stretches (helical) occupy residues 40 to 59 (YQRM…MYRK) and 66 to 83 (YAFP…YQIT). The cysteines at positions 95 and 101 are disulfide-linked. A helical transmembrane segment spans residues 110-134 (GFISIPMLSFVGFLAIIILLYINQI).

This sequence belongs to the DsbB family. BdbC subfamily.

Its subcellular location is the cell membrane. Its function is as follows. Required for disulfide bond formation in some proteins. The chain is Probable disulfide formation protein C 2 (bdbC2) from Bacillus anthracis.